A 129-amino-acid chain; its full sequence is Modulator protein MzrA (129 aa).

The Cytoplasmic segment spans residues methionine 1–histidine 14. A helical membrane pass occupies residues tyrosine 15–valine 35. Over glutamine 36–glycine 129 the chain is Periplasmic.

Belongs to the MzrA family. Interacts with EnvZ.

The protein localises to the cell inner membrane. In terms of biological role, modulates the activity of the EnvZ/OmpR two-component regulatory system, probably by directly modulating EnvZ enzymatic activity and increasing stability of phosphorylated OmpR. This Yersinia pestis (strain Pestoides F) protein is Modulator protein MzrA.